The following is a 275-amino-acid chain: Ribosomal RNA small subunit methyltransferase A (275 aa).

The S-adenosyl-L-methionine site is built by N19, L21, G46, E71, D94, and N117.

It belongs to the class I-like SAM-binding methyltransferase superfamily. rRNA adenine N(6)-methyltransferase family. RsmA subfamily.

Its subcellular location is the cytoplasm. It catalyses the reaction adenosine(1518)/adenosine(1519) in 16S rRNA + 4 S-adenosyl-L-methionine = N(6)-dimethyladenosine(1518)/N(6)-dimethyladenosine(1519) in 16S rRNA + 4 S-adenosyl-L-homocysteine + 4 H(+). Functionally, specifically dimethylates two adjacent adenosines (A1518 and A1519) in the loop of a conserved hairpin near the 3'-end of 16S rRNA in the 30S particle. May play a critical role in biogenesis of 30S subunits. This is Ribosomal RNA small subunit methyltransferase A from Burkholderia lata (strain ATCC 17760 / DSM 23089 / LMG 22485 / NCIMB 9086 / R18194 / 383).